The sequence spans 286 residues: Ribosomal RNA small subunit methyltransferase A (286 aa).

N31, I33, G58, E80, D106, and N125 together coordinate S-adenosyl-L-methionine.

This sequence belongs to the class I-like SAM-binding methyltransferase superfamily. rRNA adenine N(6)-methyltransferase family. RsmA subfamily.

Its subcellular location is the cytoplasm. The catalysed reaction is adenosine(1518)/adenosine(1519) in 16S rRNA + 4 S-adenosyl-L-methionine = N(6)-dimethyladenosine(1518)/N(6)-dimethyladenosine(1519) in 16S rRNA + 4 S-adenosyl-L-homocysteine + 4 H(+). In terms of biological role, specifically dimethylates two adjacent adenosines (A1518 and A1519) in the loop of a conserved hairpin near the 3'-end of 16S rRNA in the 30S particle. May play a critical role in biogenesis of 30S subunits. This is Ribosomal RNA small subunit methyltransferase A from Wolbachia pipientis wMel.